We begin with the raw amino-acid sequence, 2544 residues long: Highly reducing polyketide synthase pkhB (2544 aa).

Residues 9–438 (SEPIAIIGMS…GTNAHVILES (430 aa)) form the Ketosynthase family 3 (KS3) domain. Residues cysteine 182, histidine 317, and histidine 358 each act as for beta-ketoacyl synthase activity in the active site. A malonyl-CoA:ACP transacylase (MAT) domain region spans residues 566–876 (VFTGQVFRRS…PYWGCLVRDE (311 aa)). Residues 948-1082 (HELLGMPVAG…GMVGIEESAV (135 aa)) form an N-terminal hotdog fold region. The tract at residues 948 to 1252 (HELLGMPVAG…VELAALGRGS (305 aa)) is dehydratase (DH) domain. One can recognise a PKS/mFAS DH domain in the interval 948-1254 (HELLGMPVAG…LAALGRGSSA (307 aa)). The Proton acceptor; for dehydratase activity role is filled by histidine 980. Residues 1095-1254 (YTRQPNPQDL…LAALGRGSSA (160 aa)) form a C-terminal hotdog fold region. Aspartate 1165 functions as the Proton donor; for dehydratase activity in the catalytic mechanism. The tract at residues 1398–1573 (SSLRQLSALL…FSGLDLEIYD (176 aa)) is methyltransferase (CMet) domain. The enoyl reductase (ER) domain stretch occupies residues 1826 to 2142 (GHLGTLAFAE…TGDQMGKVVL (317 aa)). Positions 2169-2356 (ASYLIVGGVG…GVAIDLGPIS (188 aa)) are ketoreductase (KR) domain. The region spanning 2462–2539 (EGARLIGAAI…ALAGLVAEKS (78 aa)) is the Carrier domain. Position 2499 is an O-(pantetheine 4'-phosphoryl)serine (serine 2499).

The cofactor is pantetheine 4'-phosphate.

The protein operates within secondary metabolite biosynthesis. Functionally, highly reducing polyketide synthase; part of the pkh gene cluster that mediates the biosynthesis of 2,4-dihydroxy-6-[(3E,5E,7E)-2-oxonona-3,5,7-trienyl]benzaldehyde. The highly reducing polyketide synthase pkhB first produces the (2E,4E,6E)-octa-2,4,6-trienyl strater unit for the non-reducing polyketide synthase pkhA. This octatrienoyl starter is then loaded onto the SAT domain of the NR-PKS pkhA to be condensed with 4 malonyl-CoA units to yield 2,4-dihydroxy-6-[(3E,5E,7E)-2-oxonona-3,5,7-trienyl]benzaldehyde. This chain is Highly reducing polyketide synthase pkhB, found in Emericella nidulans (strain FGSC A4 / ATCC 38163 / CBS 112.46 / NRRL 194 / M139) (Aspergillus nidulans).